The primary structure comprises 115 residues: Prefoldin subunit beta (115 aa).

The protein belongs to the prefoldin subunit beta family. Heterohexamer of two alpha and four beta subunits.

It is found in the cytoplasm. Molecular chaperone capable of stabilizing a range of proteins. Seems to fulfill an ATP-independent, HSP70-like function in archaeal de novo protein folding. The sequence is that of Prefoldin subunit beta from Methanococcus aeolicus (strain ATCC BAA-1280 / DSM 17508 / OCM 812 / Nankai-3).